Consider the following 906-residue polypeptide: Cadherin-2A (906 aa).

The N-terminal stretch at Met-1 to Ala-28 is a signal peptide. A propeptide spanning residues Leu-29–Arg-160 is cleaved from the precursor. Cadherin domains follow at residues Asp-161–Phe-268, Leu-269–Phe-383, Thr-384–Phe-498, Thr-499–Pro-604, and Tyr-605–Pro-714. Residues Asp-161–Ala-724 lie on the Extracellular side of the membrane. 8 residues coordinate Ca(2+): Glu-171, Asp-227, Glu-229, Asp-260, Met-261, Asn-262, Asp-263, and Asn-264. The N-linked (GlcNAc...) asparagine glycan is linked to Asn-274. Residues Asp-294, Asp-296, and Asn-302 each coordinate Ca(2+). An N-linked (GlcNAc...) asparagine glycan is attached at Asn-326. Residue Asp-354 coordinates Ca(2+). 5 N-linked (GlcNAc...) asparagine glycosylation sites follow: Asn-403, Asn-573, Asn-623, Asn-652, and Asn-693. Residues Ile-725 to Met-746 form a helical membrane-spanning segment. Topologically, residues Lys-747–Asp-906 are cytoplasmic. Disordered regions lie at residues Glu-775 to Thr-800 and Ser-863 to Tyr-884. Positions Glu-776–Tyr-785 are enriched in acidic residues. The span at Ser-863–Gly-880 shows a compositional bias: low complexity.

Homodimer (via extracellular region). Can also form heterodimers with other cadherins (via extracellular region). Dimerization occurs in trans, i.e. with a cadherin chain from another cell.

It is found in the cell membrane. Its subcellular location is the sarcolemma. The protein localises to the cell junction. It localises to the cell surface. The protein resides in the desmosome. It is found in the adherens junction. In terms of biological role, calcium-dependent cell adhesion protein; preferentially mediates homotypic cell-cell adhesion. Cadherins may thus contribute to the sorting of heterogeneous cell types, and thereby play an important role during embryonic development. Required for proper neurite branching. Required for pre- and postsynaptic organization. In Xenopus laevis (African clawed frog), this protein is Cadherin-2A (cdh2-a).